A 297-amino-acid chain; its full sequence is Ribosomal protein L11 methyltransferase (297 aa).

S-adenosyl-L-methionine contacts are provided by threonine 139, glycine 164, aspartate 186, and asparagine 233.

It belongs to the methyltransferase superfamily. PrmA family.

The protein localises to the cytoplasm. The enzyme catalyses L-lysyl-[protein] + 3 S-adenosyl-L-methionine = N(6),N(6),N(6)-trimethyl-L-lysyl-[protein] + 3 S-adenosyl-L-homocysteine + 3 H(+). Functionally, methylates ribosomal protein L11. In Trichodesmium erythraeum (strain IMS101), this protein is Ribosomal protein L11 methyltransferase.